The sequence spans 288 residues: 2-methoxy-6-polyprenyl-1,4-benzoquinol methylase, mitochondrial (288 aa).

Positions 68, 102, and 146 each coordinate S-adenosyl-L-methionine. Over residues 260-270 (PITPTTSSDIP) the composition is skewed to low complexity. The disordered stretch occupies residues 260 to 288 (PITPTTSSDIPAQNTSEATCEVKPEPNSA). Residues 279–288 (CEVKPEPNSA) show a composition bias toward basic and acidic residues.

Belongs to the class I-like SAM-binding methyltransferase superfamily. MenG/UbiE family. As to quaternary structure, component of a multi-subunit COQ enzyme complex.

It localises to the mitochondrion inner membrane. It catalyses the reaction a 2-methoxy-6-(all-trans-polyprenyl)benzene-1,4-diol + S-adenosyl-L-methionine = a 5-methoxy-2-methyl-3-(all-trans-polyprenyl)benzene-1,4-diol + S-adenosyl-L-homocysteine + H(+). Its pathway is cofactor biosynthesis; ubiquinone biosynthesis. In terms of biological role, methyltransferase required for the conversion of 2-polyprenyl-6-methoxy-1,4-benzoquinol (DDMQH2) to 2-polyprenyl-3-methyl-6-methoxy-1,4-benzoquinol (DMQH2). This Leishmania donovani protein is 2-methoxy-6-polyprenyl-1,4-benzoquinol methylase, mitochondrial.